The following is a 732-amino-acid chain: Polyribonucleotide nucleotidyltransferase (732 aa).

Mg(2+)-binding residues include Asp515 and Asp521. The KH domain maps to 581-641 (PKLELFNVDP…KNVDAAKDYI (61 aa)). In terms of domain architecture, S1 motif spans 672–731 (GDEFTGSVKSVVDFGVFIELKDGVDGLLHISKIKSPLNVGDQVKVCVSEQKGNKISLSLV).

The protein belongs to the polyribonucleotide nucleotidyltransferase family. Requires Mg(2+) as cofactor.

The protein resides in the cytoplasm. It catalyses the reaction RNA(n+1) + phosphate = RNA(n) + a ribonucleoside 5'-diphosphate. Functionally, involved in mRNA degradation. Catalyzes the phosphorolysis of single-stranded polyribonucleotides processively in the 3'- to 5'-direction. This is Polyribonucleotide nucleotidyltransferase from Campylobacter concisus (strain 13826).